The chain runs to 520 residues: 2-isopropylmalate synthase (520 aa).

A Pyruvate carboxyltransferase domain is found at 5–267 (VIIFDTTLRD…YTNINHQEIY (263 aa)). Mn(2+) contacts are provided by Asp14, His202, His204, and Asn238. Residues 392–520 (HLDNFNIQSG…RIQQNTKEMV (129 aa)) form a regulatory domain region.

It belongs to the alpha-IPM synthase/homocitrate synthase family. LeuA type 1 subfamily. In terms of assembly, homodimer. Mn(2+) is required as a cofactor.

The protein localises to the cytoplasm. It catalyses the reaction 3-methyl-2-oxobutanoate + acetyl-CoA + H2O = (2S)-2-isopropylmalate + CoA + H(+). Its pathway is amino-acid biosynthesis; L-leucine biosynthesis; L-leucine from 3-methyl-2-oxobutanoate: step 1/4. Its function is as follows. Catalyzes the condensation of the acetyl group of acetyl-CoA with 3-methyl-2-oxobutanoate (2-ketoisovalerate) to form 3-carboxy-3-hydroxy-4-methylpentanoate (2-isopropylmalate). The sequence is that of 2-isopropylmalate synthase from Photorhabdus laumondii subsp. laumondii (strain DSM 15139 / CIP 105565 / TT01) (Photorhabdus luminescens subsp. laumondii).